The primary structure comprises 467 residues: ATP-dependent protease ATPase subunit HslU (467 aa).

ATP contacts are provided by residues Val-22 and 64–69; that span reads GVGKTE. The tract at residues 146 to 185 is disordered; it reads KASNNSNPLESLLGGAIPNFGNNDDEEEETPTEEIKTKRS. The segment covering 168–177 has biased composition (acidic residues); it reads NDDEEEETPT. ATP is bound by residues Asp-280, Glu-345, and Arg-417.

Belongs to the ClpX chaperone family. HslU subfamily. As to quaternary structure, a double ring-shaped homohexamer of HslV is capped on each side by a ring-shaped HslU homohexamer. The assembly of the HslU/HslV complex is dependent on binding of ATP.

It is found in the cytoplasm. In terms of biological role, ATPase subunit of a proteasome-like degradation complex; this subunit has chaperone activity. The binding of ATP and its subsequent hydrolysis by HslU are essential for unfolding of protein substrates subsequently hydrolyzed by HslV. HslU recognizes the N-terminal part of its protein substrates and unfolds these before they are guided to HslV for hydrolysis. This Staphylococcus haemolyticus (strain JCSC1435) protein is ATP-dependent protease ATPase subunit HslU.